The primary structure comprises 457 residues: Probable ubiquitin carboxyl-terminal hydrolase 16 (457 aa).

A disordered region spans residues 34-97 (VSSPSVPEGT…DGANDFVDED (64 aa)). Residues 45-67 (TVLNNPKQSTVSRKSFSAPTSPT) show a composition bias toward polar residues. Serine 61 is subject to Phosphoserine. At threonine 64 the chain carries Phosphothreonine. Residue serine 65 is modified to Phosphoserine. The region spanning 125 to 429 (PGLVNLGNTC…QAYILQYKRK (305 aa)) is the USP domain. Catalysis depends on cysteine 134, which acts as the Nucleophile. Catalysis depends on histidine 388, which acts as the Proton acceptor. Positions 434–457 (SKHKLNTENTVTKTSNKKRRKISF) are disordered. Basic residues predominate over residues 448 to 457 (SNKKRRKISF).

The protein belongs to the peptidase C19 family.

The catalysed reaction is Thiol-dependent hydrolysis of ester, thioester, amide, peptide and isopeptide bonds formed by the C-terminal Gly of ubiquitin (a 76-residue protein attached to proteins as an intracellular targeting signal).. This Schizosaccharomyces pombe (strain 972 / ATCC 24843) (Fission yeast) protein is Probable ubiquitin carboxyl-terminal hydrolase 16 (ubp16).